The sequence spans 345 residues: Growth hormone-inducible transmembrane protein (345 aa).

A mitochondrion-targeting transit peptide spans 1 to 45 (MLAARLVCLRTLPSRVFHPAFTKASPVVKNSITKNQWLLTPSREY). Topologically, residues 46-82 (ATKTRIGIRRGRTGQELKEAALEPSMEKIFKIDQMGR) are mitochondrial matrix. A helical transmembrane segment spans residues 83–103 (WFVAGGAAVGLGALCYYGLGL). Over 104-125 (SNEIGAIEKAVIWPQYVKDRIH) the chain is Mitochondrial intermembrane. Residues 126 to 146 (STYMYLAGSIGLTALSAIAIS) form a helical membrane-spanning segment. The Mitochondrial matrix portion of the chain corresponds to 147–159 (RTPVLMNFMMRGS). The helical transmembrane segment at 160 to 180 (WVTIGVTFAAMVGAGMLVRSI) threads the bilayer. Topologically, residues 181-190 (PYDQSPGPKH) are mitochondrial intermembrane. The chain crosses the membrane as a helical span at residues 191–211 (LAWLLHSGVMGAVVAPLTILG). Topologically, residues 212–213 (GP) are mitochondrial matrix. The helical transmembrane segment at 214 to 234 (LLIRAAWYTAGIVGGLSTVAM) threads the bilayer. The Mitochondrial intermembrane segment spans residues 235-244 (CAPSEKFLNM). The chain crosses the membrane as a helical span at residues 245–265 (GAPLGVGLGLVFVSSLGSMFL). At 266–271 (PPTTVA) the chain is on the mitochondrial matrix side. A helical transmembrane segment spans residues 272–292 (GATLYSVAMYGGLVLFSMFLL). Residues 293–345 (YDTQKVIKRAEVSPMYGVQKYDPINSMLSIYMDTLNIFMRVATMLATGGNRKK) lie on the Mitochondrial intermembrane side of the membrane.

The protein belongs to the BI1 family. Interacts with LETM1. Interacts with AFG3L2. Undergoes AFG3L2-mediated proteolytic degradation, upon hyperpolarization of mitochondria.

The protein resides in the mitochondrion inner membrane. It catalyses the reaction Ca(2+)(in) + 2 H(+)(out) = Ca(2+)(out) + 2 H(+)(in). The catalysed reaction is K(+)(in) + H(+)(out) = K(+)(out) + H(+)(in). Functionally, plays an important role in maintenance of mitochondrial morphology and in mediating either calcium or potassium/proton antiport. Mediates proton-dependent calcium efflux from mitochondrion. Also functions as an electroneutral mitochondrial proton/potassium exchanger. Required for the mitochondrial tubular network and cristae organization. Involved in apoptotic release of cytochrome c. Inhibits the proteolytic activity of AFG3L2, stimulating respiration and stabilizing respiratory enzymes in actively respiring mitochondria. However, when mitochondria become hyperpolarized, GHITM loses its inhibitory activity toward AFG3L2 and the now the active AFG3L2 turns first on GHITM and, if hyperpolarization persists, on other proteins of the mitochondria, leading to a broad remodeling of the mitochondrial proteome. In Homo sapiens (Human), this protein is Growth hormone-inducible transmembrane protein (GHITM).